Here is a 498-residue protein sequence, read N- to C-terminus: Aspartyl aminopeptidase (498 aa).

Position 91 (histidine 91) interacts with Zn(2+). Histidine 166 serves as a coordination point for substrate. Residue aspartate 274 coordinates Zn(2+). Glutamate 311 serves as a coordination point for substrate. Zn(2+) is bound by residues glutamate 312 and aspartate 363. 4 residues coordinate substrate: aspartate 363, histidine 366, lysine 391, and tyrosine 398. Histidine 463 is a binding site for Zn(2+).

Belongs to the peptidase M18 family. As to quaternary structure, tetrahedron-shaped homododecamer built from six homodimers. Zn(2+) serves as cofactor. The N-terminus is blocked.

It catalyses the reaction Release of an N-terminal aspartate or glutamate from a peptide, with a preference for aspartate.. Inhibited by zinc. Stimulated by calcium and bacitracin. The protein is Aspartyl aminopeptidase (dapA) of Aspergillus oryzae (strain ATCC 42149 / RIB 40) (Yellow koji mold).